We begin with the raw amino-acid sequence, 143 residues long: Transcriptional regulator MraZ (143 aa).

2 SpoVT-AbrB domains span residues 5–47 and 76–119; these read THSP…TTRE and ANAE…DAGT.

Belongs to the MraZ family. In terms of assembly, forms oligomers.

It is found in the cytoplasm. It localises to the nucleoid. This Clavibacter michiganensis subsp. michiganensis (strain NCPPB 382) protein is Transcriptional regulator MraZ.